We begin with the raw amino-acid sequence, 220 residues long: Elongation factor Ts, chloroplastic (220 aa).

This sequence belongs to the EF-Ts family.

Its subcellular location is the plastid. It localises to the chloroplast. Associates with the EF-Tu.GDP complex and induces the exchange of GDP to GTP. It remains bound to the aminoacyl-tRNA.EF-Tu.GTP complex up to the GTP hydrolysis stage on the ribosome. This Pyropia yezoensis (Susabi-nori) protein is Elongation factor Ts, chloroplastic (tsf).